A 325-amino-acid polypeptide reads, in one-letter code: Release factor glutamine methyltransferase (325 aa).

S-adenosyl-L-methionine contacts are provided by residues G141–G145, D164, W193, and N207. N207–Y210 provides a ligand contact to substrate. The tract at residues L306–A325 is disordered.

The protein belongs to the protein N5-glutamine methyltransferase family. PrmC subfamily.

It carries out the reaction L-glutaminyl-[peptide chain release factor] + S-adenosyl-L-methionine = N(5)-methyl-L-glutaminyl-[peptide chain release factor] + S-adenosyl-L-homocysteine + H(+). In terms of biological role, methylates the class 1 translation termination release factors RF1/PrfA and RF2/PrfB on the glutamine residue of the universally conserved GGQ motif. The sequence is that of Release factor glutamine methyltransferase from Rhodospirillum rubrum (strain ATCC 11170 / ATH 1.1.1 / DSM 467 / LMG 4362 / NCIMB 8255 / S1).